Consider the following 230-residue polypeptide: Cytidylate kinase (230 aa).

12–20 (GPSGAGKGT) serves as a coordination point for ATP.

This sequence belongs to the cytidylate kinase family. Type 1 subfamily.

The protein resides in the cytoplasm. The catalysed reaction is CMP + ATP = CDP + ADP. It catalyses the reaction dCMP + ATP = dCDP + ADP. This chain is Cytidylate kinase, found in Shewanella sp. (strain MR-4).